We begin with the raw amino-acid sequence, 1456 residues long: Retrovirus-related Pol polyprotein from transposon RE2 (1456 aa).

Residues 205 to 252 (NVVTHRNTNTNRNQNNRGDNRNYNNNNNRSNSWQPSSSGSRSDNRQPK) are disordered. A compositionally biased stretch (low complexity) spans 210–245 (RNTNTNRNQNNRGDNRNYNNNNNRSNSWQPSSSGSR). The CCHC-type zinc-finger motif lies at 257–273 (RCQICSVQGHSAKRCPQ). The span at 276–291 (QFQSTTNQQQSTSPFT) shows a compositional bias: low complexity. Positions 276–295 (QFQSTTNQQQSTSPFTPWQP) are disordered. The active-site For protease activity is D313. Residues 498 to 661 (TSSKPLEYIY…SPFQKLFGQP (164 aa)) enclose the Integrase catalytic domain. Residues D509 and D571 each contribute to the Mg(2+) site. A compositionally biased stretch (polar residues) spans 738–754 (STSQEQRSDSAPNWPSH). The interval 738–896 (STSQEQRSDS…PPLPPVLPAP (159 aa)) is disordered. Residues 793–814 (SSSNLPSSSISSPSSSEPTAPS) show a composition bias toward low complexity. Positions 816 to 827 (NGPQPTAQPHQT) are enriched in polar residues. Composition is skewed to low complexity over residues 828-841 (QNSN…NNPN) and 849-886 (SPNQ…STST). Pro residues predominate over residues 887-896 (PPLPPVLPAP). The region spanning 965–1208 (NHTWDLVPPP…LTAKPVATPM (244 aa)) is the Reverse transcriptase Ty1/copia-type domain.

The enzyme catalyses DNA(n) + a 2'-deoxyribonucleoside 5'-triphosphate = DNA(n+1) + diphosphate. The chain is Retrovirus-related Pol polyprotein from transposon RE2 (RE2) from Arabidopsis thaliana (Mouse-ear cress).